Here is a 309-residue protein sequence, read N- to C-terminus: ATP-dependent Clp protease proteolytic subunit 3, chloroplastic (309 aa).

The transit peptide at 1 to 70 directs the protein to the chloroplast; that stretch reads MEMSLRLASS…WDVSSFSIDS (70 aa). Position 71 is an N-acetylvaline (V71). The active-site Nucleophile is S164. H189 is a catalytic residue. Residue T194 is modified to Phosphothreonine. The interval 290 to 309 is disordered; the sequence is DNTNLPSERSMTQNGYAAIE. Residues 292-309 show a composition bias toward polar residues; the sequence is TNLPSERSMTQNGYAAIE.

It belongs to the peptidase S14 family. In terms of assembly, component of the chloroplastic Clp protease core complex which consist of at least 16 proteins: CLPP4 (3 copies), CLPP5 (3 copies), CLPR4 (2 copies), ClpP1 (1 copy), CLPP6 (1 copy), CLPR2 (1 copy), CLPT1 (1 copy), CLPT2 (1 copy) and 3 copies of CLPP3 and/or CLPR1 and/or CLPR3. The core complex is organized in two heptameric rings, one containing CLPP3,4,5,6 in a 1:2:3:1 ratio and the other CLPP1 and CLPR1,2,3,4 in a 3:1:1:1:1 ratio. Interacts with CHIP. Ubiquitinated in vitro by CHIP. As to expression, mostly expressed in leaves. Also detected in stems, and to a lower extent, in roots (at protein level).

The protein resides in the plastid. It localises to the chloroplast stroma. The enzyme catalyses Hydrolysis of proteins to small peptides in the presence of ATP and magnesium. alpha-casein is the usual test substrate. In the absence of ATP, only oligopeptides shorter than five residues are hydrolyzed (such as succinyl-Leu-Tyr-|-NHMec, and Leu-Tyr-Leu-|-Tyr-Trp, in which cleavage of the -Tyr-|-Leu- and -Tyr-|-Trp bonds also occurs).. Functionally, cleaves peptides in various proteins in a process that requires ATP hydrolysis. Has a chymotrypsin-like activity. Plays a major role in the degradation of misfolded proteins. In the absence of CLPP3, modified ClpPR core(s) could be formed, albeit at strongly reduced levels. This Arabidopsis thaliana (Mouse-ear cress) protein is ATP-dependent Clp protease proteolytic subunit 3, chloroplastic.